The chain runs to 438 residues: MSSDSPAAGDGGEQAAAGTSVPSPSYDKQKEKARVSRTSLILWHAHQNDAAAVRKLLEEDPTLVHARDYDKRTPLHVASLHGWIDVVKCLLEFGADVNAQDRWKNTPLADAEGARKQKMIELLKSHGGLSYGQNGSHFEPKPVPPPIPKKCDWEIEPAELDFSNAAMIGKGSFGEIVKAYWRGTPVAVKRILPSLSDDRLVIQDFRHEVDLLVKLRHPNIVQFLGAVTERKPLMLITEYLRGGDLHQYLKEKGGLTPTTAVNFALDIARGMTYLHNEPNVIIHRDLKPRNVLLVNSSADHLKVGDFGLSKLIKVQNSHDVYKMTGETGSYRYMAPEVFKHRRYDKKVDVFSFAMILYEMLEGEPPFANHEPYEAAKHVSDGHRPTFRSKGCTPDLRELIVKCWDADMNQRPSFLDILKRLEKIKETLPSDHHWGLFTS.

Positions 1-31 are disordered; that stretch reads MSSDSPAAGDGGEQAAAGTSVPSPSYDKQKE. ANK repeat units follow at residues 36–65, 70–99, and 103–133; these read SRTS…TLVH, DKRT…DVNA, and WKNT…SYGQ. In terms of domain architecture, Protein kinase spans 162-427; sequence FSNAAMIGKG…KRLEKIKETL (266 aa). Residues 168 to 176 and Lys189 contribute to the ATP site; that span reads IGKGSFGEI. Asp285 functions as the Proton acceptor in the catalytic mechanism.

Belongs to the protein kinase superfamily. Ser/Thr protein kinase family. In terms of assembly, interacts with BRL2. Binds to MSSP1/TMT1 at the tonoplast. In terms of processing, phosphorylated. In terms of tissue distribution, restricted to mature vascular cells. Mostly expressed in mature leaves and seeds, and, to a lower level, in seedlings, young leaves, flowers and siliques.

It localises to the vacuole. The catalysed reaction is L-seryl-[protein] + ATP = O-phospho-L-seryl-[protein] + ADP + H(+). It carries out the reaction L-threonyl-[protein] + ATP = O-phospho-L-threonyl-[protein] + ADP + H(+). Serine/threonine protein kinase which may function as an adapter protein for BRL2. Required during vascular development for the establishment of vein pattern in foliar organs. Mediates MSSP1/TMT1 phosphorylation and activation to enhance its carrier activity and consequently vacuolar sugar accumulation, particularly in response to cold. This is Serine/threonine-protein kinase VIK from Arabidopsis thaliana (Mouse-ear cress).